The chain runs to 48 residues: Large ribosomal subunit protein bL33A (48 aa).

Belongs to the bacterial ribosomal protein bL33 family.

In Shouchella clausii (strain KSM-K16) (Alkalihalobacillus clausii), this protein is Large ribosomal subunit protein bL33A.